We begin with the raw amino-acid sequence, 172 residues long: Interferon tau-3 (172 aa).

Disulfide bonds link C1–C99 and C29–C139. N78 is a glycosylation site (N-linked (GlcNAc...) asparagine).

Belongs to the alpha/beta interferon family. IFN-alphaII subfamily. In terms of tissue distribution, constitutively and exclusively expressed in the mononuclear cells of the extraembryonic trophectoderm.

The protein resides in the secreted. In terms of biological role, paracrine hormone primarily responsible for maternal recognition of pregnancy. Interacts with endometrial receptors, probably type I interferon receptors, and blocks estrogen receptor expression, preventing the estrogen-induced increase in oxytocin receptor expression in the endometrium. This results in the suppression of the pulsatile endometrial release of the luteolytic hormone prostaglandin F2-alpha, hindering the regression of the corpus luteum (luteolysis) and therefore a return to ovarian cyclicity. This, and a possible direct effect of IFN-tau on prostaglandin synthesis, leads in turn to continued ovarian progesterone secretion, which stimulates the secretion by the endometrium of the nutrients required for the growth of the conceptus. In summary, displays particularly high antiviral and antiproliferative potency concurrently with particular weak cytotoxicity, high antiluteolytic activity and immunomodulatory properties. In contrast with other IFNs, IFN-tau is not virally inducible. The polypeptide is Interferon tau-3 (IFNT3) (Bos taurus (Bovine)).